A 296-amino-acid chain; its full sequence is Maltose/maltodextrin transport system permease protein MalG (296 aa).

Residues 1–12 lie on the Cytoplasmic side of the membrane; that stretch reads MAMVQPKSQKLR. Residues 13–35 traverse the membrane as a helical segment; that stretch reads LLITHLGLLIFIAAIMFPLLMVI. Topologically, residues 36–88 are periplasmic; the sequence is AISLREGNFATGSLIPDKISWEHWRLALGFSVEHADGRVTPPPFPVLLWLWNS. The 197-residue stretch at 85–281 folds into the ABC transmembrane type-1 domain; it reads LWNSVKIAGI…IPITLVFLLA (197 aa). Residues 89 to 111 traverse the membrane as a helical segment; the sequence is VKIAGITAIGIVALSTTCAYAFA. Over 112 to 123 the chain is Cytoplasmic; sequence RMRFPGKATLLK. Residues 124–143 traverse the membrane as a helical segment; sequence GMLIFQMFPAVLSLVALYAL. Residues 144–152 are Periplasmic-facing; sequence FDRLGQYIP. The helical transmembrane segment at 153 to 175 threads the bilayer; it reads FIGLNTHGGVIFAYLGGIALHVW. Topologically, residues 176–204 are cytoplasmic; the sequence is TIKGYFETIDSSLEEAAALDGATPWQAFR. A helical transmembrane segment spans residues 205–227; the sequence is LVLLPLSVPILAVVFILSFIAAI. Over 228 to 257 the chain is Periplasmic; sequence TEVPVASLLLRDVDSYTLAVGMQQYLNPQN. A helical transmembrane segment spans residues 258-280; that stretch reads YLWGDFAAAAVLSAIPITLVFLL. Over 281 to 296 the chain is Cytoplasmic; the sequence is AQRWLVNGLTAGGVKG.

The protein belongs to the binding-protein-dependent transport system permease family. MalFG subfamily. The complex is composed of two ATP-binding proteins (MalK), two transmembrane proteins (MalG and MalF) and a solute-binding protein (MalE).

The protein resides in the cell inner membrane. Its function is as follows. Part of the ABC transporter complex MalEFGK involved in maltose/maltodextrin import. Probably responsible for the translocation of the substrate across the membrane. The chain is Maltose/maltodextrin transport system permease protein MalG (malG) from Salmonella typhimurium (strain LT2 / SGSC1412 / ATCC 700720).